We begin with the raw amino-acid sequence, 61 residues long: Weak toxin CM-1c (61 aa).

4 cysteine pairs are disulfide-bonded: cysteine 3-cysteine 21, cysteine 14-cysteine 37, cysteine 41-cysteine 53, and cysteine 54-cysteine 59.

It belongs to the three-finger toxin family. Short-chain subfamily. Orphan group VI sub-subfamily. Expressed by the venom gland.

The protein resides in the secreted. This is Weak toxin CM-1c from Hemachatus haemachatus (Rinkhals).